A 131-amino-acid chain; its full sequence is Leptin receptor gene-related protein (131 aa).

Helical transmembrane passes span 7-27, 32-52, 69-89, and 100-120; these read LVAL…GCAL, VYWP…YFIA, LAYF…VVLA, and GLVL…FLVF.

This sequence belongs to the OB-RGRP/VPS55 family. In terms of assembly, interacts with LEPR. Interacts with RAB13. In terms of tissue distribution, widely distributed in the brain, with elevated expression in the hypothalamic regions, including the paraventricular nucleus. In the placenta, present at high levels in the junctional zone situated towards the maternal aspect and throughout the labyrinth zone in close proximity to the developing fetus.

The protein resides in the golgi apparatus membrane. The protein localises to the endosome membrane. Functionally, negatively regulates leptin receptor (LEPR) cell surface expression, and thus decreases response to leptin. Negatively regulates growth hormone (GH) receptor cell surface expression in liver. May play a role in liver resistance to GH during periods of reduced nutrient availability. In Mus musculus (Mouse), this protein is Leptin receptor gene-related protein (Leprot).